We begin with the raw amino-acid sequence, 92 residues long: Small ribosomal subunit protein uS19 (92 aa).

Belongs to the universal ribosomal protein uS19 family.

Protein S19 forms a complex with S13 that binds strongly to the 16S ribosomal RNA. The polypeptide is Small ribosomal subunit protein uS19 (Streptococcus pyogenes serotype M49 (strain NZ131)).